Here is a 454-residue protein sequence, read N- to C-terminus: Diaminobutyrate--2-oxoglutarate aminotransferase (454 aa).

Position 287 is an N6-(pyridoxal phosphate)lysine (K287).

It belongs to the class-III pyridoxal-phosphate-dependent aminotransferase family. Pyridoxal 5'-phosphate is required as a cofactor.

It catalyses the reaction L-2,4-diaminobutanoate + 2-oxoglutarate = L-aspartate 4-semialdehyde + L-glutamate. The protein operates within amine and polyamine biosynthesis; 1,3-diaminopropane biosynthesis; 1,3-diaminopropane from L-aspartate 4-semialdehyde: step 1/2. This chain is Diaminobutyrate--2-oxoglutarate aminotransferase (dat), found in Haemophilus influenzae (strain ATCC 51907 / DSM 11121 / KW20 / Rd).